We begin with the raw amino-acid sequence, 180 residues long: N-terminal acetyltransferase B complex catalytic subunit naa20 (180 aa).

The N-acetyltransferase domain occupies 2-156 (TDTRKFKATD…DSFDMRKPLS (155 aa)).

Belongs to the acetyltransferase family. Component of the N-terminal acetyltransferase B (NatB) complex.

The protein localises to the cytoplasm. Its subcellular location is the nucleus. It catalyses the reaction N-terminal L-methionyl-L-asparaginyl-[protein] + acetyl-CoA = N-terminal N(alpha)-acetyl-L-methionyl-L-asparaginyl-[protein] + CoA + H(+). It carries out the reaction N-terminal L-methionyl-L-glutaminyl-[protein] + acetyl-CoA = N-terminal N(alpha)-acetyl-L-methionyl-L-glutaminyl-[protein] + CoA + H(+). The enzyme catalyses N-terminal L-methionyl-L-aspartyl-[protein] + acetyl-CoA = N-terminal N(alpha)-acetyl-L-methionyl-L-aspartyl-[protein] + CoA + H(+). The catalysed reaction is N-terminal L-methionyl-L-glutamyl-[protein] + acetyl-CoA = N-terminal N(alpha)-acetyl-L-methionyl-L-glutamyl-[protein] + CoA + H(+). Functionally, catalytic subunit of the NatB N-terminal acetyltransferase, which catalyzes acetylation of the amino-terminal methionine residues of all proteins beginning with Met-Asp or Met-Glu and of some proteins beginning with Met-Asn, Met-Gln or Met-Met. The chain is N-terminal acetyltransferase B complex catalytic subunit naa20 (naa20) from Schizosaccharomyces pombe (strain 972 / ATCC 24843) (Fission yeast).